Here is a 367-residue protein sequence, read N- to C-terminus: Protein-glutamate methylesterase/protein-glutamine glutaminase 2 (367 aa).

Residues 3 to 120 (SVVVVDDSAF…SLDIVRIEND (118 aa)) enclose the Response regulatory domain. A 4-aspartylphosphate modification is found at D54. The tract at residues 132–174 (RMLRTPRPVRPAPTASAPAQTAQVASAAPATAPSRPAMPATRA) is disordered. Positions 143–174 (APTASAPAQTAQVASAAPATAPSRPAMPATRA) are enriched in low complexity. Residues 175 to 367 (SRPVRDVVAI…AAAIMNGLYK (193 aa)) enclose the CheB-type methylesterase domain. Catalysis depends on residues S187, H214, and D310.

It belongs to the CheB family. Phosphorylated by CheA. Phosphorylation of the N-terminal regulatory domain activates the methylesterase activity.

The protein resides in the cytoplasm. The catalysed reaction is [protein]-L-glutamate 5-O-methyl ester + H2O = L-glutamyl-[protein] + methanol + H(+). The enzyme catalyses L-glutaminyl-[protein] + H2O = L-glutamyl-[protein] + NH4(+). Involved in chemotaxis. Part of a chemotaxis signal transduction system that modulates chemotaxis in response to various stimuli. Catalyzes the demethylation of specific methylglutamate residues introduced into the chemoreceptors (methyl-accepting chemotaxis proteins or MCP) by CheR. Also mediates the irreversible deamidation of specific glutamine residues to glutamic acid. This Nitratidesulfovibrio vulgaris (strain ATCC 29579 / DSM 644 / CCUG 34227 / NCIMB 8303 / VKM B-1760 / Hildenborough) (Desulfovibrio vulgaris) protein is Protein-glutamate methylesterase/protein-glutamine glutaminase 2.